Reading from the N-terminus, the 287-residue chain is Inorganic pyrophosphatase (287 aa).

Diphosphate is bound at residue R79. Mg(2+) contacts are provided by D116, D121, and D153.

It belongs to the PPase family. Homodimer. Requires Mg(2+) as cofactor.

It localises to the cytoplasm. It carries out the reaction diphosphate + H2O = 2 phosphate + H(+). The chain is Inorganic pyrophosphatase (IPP1) from Kluyveromyces lactis (strain ATCC 8585 / CBS 2359 / DSM 70799 / NBRC 1267 / NRRL Y-1140 / WM37) (Yeast).